Here is a 136-residue protein sequence, read N- to C-terminus: UPF0102 protein BBta_0181 (136 aa).

This sequence belongs to the UPF0102 family.

The protein is UPF0102 protein BBta_0181 of Bradyrhizobium sp. (strain BTAi1 / ATCC BAA-1182).